The following is a 912-amino-acid chain: Microtubule-associated protein 10 (912 aa).

6 disordered regions span residues 31 to 50 (VAEEEQKEEGEGASPPRPSR), 209 to 239 (KSVEVSPQTWQENQQLQQPDSEPSPGDADKP), 254 to 296 (GRAF…QEGT), 335 to 366 (ASEEWDDGTFLKENVNPPTHTNPPEHTNSATG), 443 to 469 (SPESSVKSTCKSESKKDKLSVGENEKS), and 730 to 859 (RACD…VSSY). Over residues 211 to 229 (VEVSPQTWQENQQLQQPDS) the composition is skewed to polar residues. The segment covering 254–263 (GRAFHSKADS) has biased composition (basic and acidic residues). Polar residues predominate over residues 266 to 295 (TDSMENGKTNSDMCSKGSSERSVSPPNQEG). Residues 347–362 (ENVNPPTHTNPPEHTN) are compositionally biased toward low complexity. Residues 452–468 (CKSESKKDKLSVGENEK) show a composition bias toward basic and acidic residues. Polar residues predominate over residues 735-768 (SPGTENPKNSQHTSTSSETRLSIRKNSSAKSSIL). The span at 796-807 (EASSSDFSSSQW) shows a compositional bias: low complexity. Over residues 841-859 (GCKSSEKSQSPRTSQVSSY) the composition is skewed to polar residues.

In terms of assembly, interacts (via middle region) with microtubules.

It is found in the cytoplasm. The protein resides in the cytoskeleton. The protein localises to the spindle pole. It localises to the microtubule organizing center. Its subcellular location is the centrosome. It is found in the midbody. In terms of biological role, microtubule-associated protein (MAP) that plays a role in the regulation of cell division; promotes microtubule stability and participates in the organization of the spindle midzone and normal progress of cytokinesis. The polypeptide is Microtubule-associated protein 10 (MAP10) (Bos taurus (Bovine)).